The sequence spans 463 residues: Asparagine--tRNA ligase (463 aa).

The protein belongs to the class-II aminoacyl-tRNA synthetase family. In terms of assembly, homodimer.

The protein resides in the cytoplasm. It carries out the reaction tRNA(Asn) + L-asparagine + ATP = L-asparaginyl-tRNA(Asn) + AMP + diphosphate + H(+). The protein is Asparagine--tRNA ligase of Acholeplasma laidlawii (strain PG-8A).